A 398-amino-acid polypeptide reads, in one-letter code: Protein-glutamate methylesterase/protein-glutamine glutaminase (398 aa).

Residues 4-121 form the Response regulatory domain; the sequence is KVLVVDDSSF…ATNKDDAILL (118 aa). D55 carries the 4-aspartylphosphate modification. The segment at 133–200 is disordered; the sequence is RMYRSSSLTP…SANPTTSSIS (68 aa). Composition is skewed to polar residues over residues 136-146 and 168-200; these read RSSSLTPTSTI and RLAS…SSIS. The CheB-type methylesterase domain maps to 205–398; sequence SGKQYKLLLI…EAILKESSRG (194 aa). Catalysis depends on residues S217, H244, and D340.

The protein belongs to the CheB family. In terms of processing, phosphorylated by CheA. Phosphorylation of the N-terminal regulatory domain activates the methylesterase activity.

Its subcellular location is the cytoplasm. The catalysed reaction is [protein]-L-glutamate 5-O-methyl ester + H2O = L-glutamyl-[protein] + methanol + H(+). It carries out the reaction L-glutaminyl-[protein] + H2O = L-glutamyl-[protein] + NH4(+). In terms of biological role, involved in chemotaxis. Part of a chemotaxis signal transduction system that modulates chemotaxis in response to various stimuli. Catalyzes the demethylation of specific methylglutamate residues introduced into the chemoreceptors (methyl-accepting chemotaxis proteins or MCP) by CheR. Also mediates the irreversible deamidation of specific glutamine residues to glutamic acid. The protein is Protein-glutamate methylesterase/protein-glutamine glutaminase of Shewanella frigidimarina (strain NCIMB 400).